Here is a 697-residue protein sequence, read N- to C-terminus: Elongation factor G (697 aa).

The region spanning 8–283 (ERMRNIGIAA…AVVDYLPSPL (276 aa)) is the tr-type G domain. Residues 17–24 (AHIDAGKT), 81–85 (DTPGH), and 135–138 (NKMD) contribute to the GTP site.

Belongs to the TRAFAC class translation factor GTPase superfamily. Classic translation factor GTPase family. EF-G/EF-2 subfamily.

Its subcellular location is the cytoplasm. Its function is as follows. Catalyzes the GTP-dependent ribosomal translocation step during translation elongation. During this step, the ribosome changes from the pre-translocational (PRE) to the post-translocational (POST) state as the newly formed A-site-bound peptidyl-tRNA and P-site-bound deacylated tRNA move to the P and E sites, respectively. Catalyzes the coordinated movement of the two tRNA molecules, the mRNA and conformational changes in the ribosome. In Solibacter usitatus (strain Ellin6076), this protein is Elongation factor G.